A 679-amino-acid polypeptide reads, in one-letter code: Glycine--tRNA ligase beta subunit (679 aa).

Belongs to the class-II aminoacyl-tRNA synthetase family. Tetramer of two alpha and two beta subunits.

The protein resides in the cytoplasm. The enzyme catalyses tRNA(Gly) + glycine + ATP = glycyl-tRNA(Gly) + AMP + diphosphate. The chain is Glycine--tRNA ligase beta subunit from Streptococcus pyogenes serotype M4 (strain MGAS10750).